A 451-amino-acid polypeptide reads, in one-letter code: Crh-like protein 2 (451 aa).

The first 21 residues, 1-21 (MQFNSLVLLAGATILSPFVQA), serve as a signal peptide directing secretion. The region spanning 22-241 (QTWTTCNPLN…FTKVPFTMYV (220 aa)) is the GH16 domain. Residues Cys-27 and Cys-34 are joined by a disulfide bond. Asn-31, Asn-43, Asn-49, and Asn-59 each carry an N-linked (GlcNAc...) asparagine glycan. Glu-121 (nucleophile) is an active-site residue. Glu-125 acts as the Proton donor in catalysis. Glu-125 contributes to the chitin binding site. Residues Asn-130, Asn-143, and Asn-165 are each glycosylated (N-linked (GlcNAc...) asparagine). Positions 206, 210, and 222 each coordinate chitin. Asn-273 is a glycosylation site (N-linked (GlcNAc...) asparagine). Residues 305 to 325 (VYCGGGAAVAALVSAFLFTFL) form a helical membrane-spanning segment. Residue Asn-366 is glycosylated (N-linked (GlcNAc...) asparagine).

It belongs to the glycosyl hydrolase 16 family. CRH1 subfamily. Forms homodimers as well as heterodimers with other crh protein members crh1 and crh3. Dimerization may be necessary for the transglycosylation activity.

It localises to the membrane. The enzyme catalyses Random endo-hydrolysis of N-acetyl-beta-D-glucosaminide (1-&gt;4)-beta-linkages in chitin and chitodextrins.. Dual chitinase/transglycosylase that plays a role in cell wall architecture. Chitinase and transglycosylase activities are coupled. Required for the polysaccharide cross-linking at the septa and the cell wall. More specifically, transfers chitin to 1,6-beta-glucan in the cell wall. In Botryotinia fuckeliana (strain B05.10) (Noble rot fungus), this protein is Crh-like protein 2.